Here is a 423-residue protein sequence, read N- to C-terminus: Enolase (423 aa).

Q165 lines the (2R)-2-phosphoglycerate pocket. The Proton donor role is filled by E209. Residues D244, E285, and D310 each coordinate Mg(2+). (2R)-2-phosphoglycerate contacts are provided by K335, R364, S365, and K386. K335 functions as the Proton acceptor in the catalytic mechanism.

It belongs to the enolase family. In terms of assembly, homooctamer formed by a tetramer of dimers. Mg(2+) serves as cofactor.

It is found in the cytoplasm. The protein resides in the secreted. Its subcellular location is the cell surface. The catalysed reaction is (2R)-2-phosphoglycerate = phosphoenolpyruvate + H2O. Its pathway is carbohydrate degradation; glycolysis; pyruvate from D-glyceraldehyde 3-phosphate: step 4/5. Its activity is regulated as follows. The covalent binding to the substrate causes inactivation of the enzyme, and possibly serves as a signal for the export of the protein. Its function is as follows. Catalyzes the reversible conversion of 2-phosphoglycerate (2-PG) into phosphoenolpyruvate (PEP). It is essential for the degradation of carbohydrates via glycolysis. This Methanocaldococcus jannaschii (strain ATCC 43067 / DSM 2661 / JAL-1 / JCM 10045 / NBRC 100440) (Methanococcus jannaschii) protein is Enolase.